A 475-amino-acid chain; its full sequence is Argininosuccinate lyase (475 aa).

It belongs to the lyase 1 family. Argininosuccinate lyase subfamily.

The protein resides in the cytoplasm. The enzyme catalyses 2-(N(omega)-L-arginino)succinate = fumarate + L-arginine. The protein operates within amino-acid biosynthesis; L-arginine biosynthesis; L-arginine from L-ornithine and carbamoyl phosphate: step 3/3. The polypeptide is Argininosuccinate lyase (Streptomyces coelicolor (strain ATCC BAA-471 / A3(2) / M145)).